Reading from the N-terminus, the 23-residue chain is Laccase-1 (23 aa).

It belongs to the multicopper oxidase family. The cofactor is Cu cation.

Its subcellular location is the secreted. The catalysed reaction is 4 hydroquinone + O2 = 4 benzosemiquinone + 2 H2O. With respect to regulation, strongly inhibited by sodium azide, sodium cyanide, Li(+), Sn(+), Hg(2+), and the disulfide-reducing agents beta-mercaptoethanol, dithiothreitol and thioglycolic acid. Moderately inhibited by Mn(2+) and Fe(2+), inhibition by these metal ions is stronger at 0.1 mM than at 1 mM. Moderately inhibited by Cu(2+). Functionally, lignin degradation and detoxification of lignin-derived products. Demethylates eucalyptus hard wood lignin. Has high activity against the non-phenolic heterocyclic compound ABTS, and lower activity against the phenolic substrates syringic acid, caffeic acid, syringaldazine, vanillic acid, catechol and levodihydroxyphenylalanine. This is Laccase-1 from Galerina sp.